The sequence spans 500 residues: Transcription termination/antitermination protein NusA (500 aa).

The S1 motif domain maps to 135–205 (GEIVTGVVKK…RGAQLFVTRS (71 aa)). The KH domain occupies 307-373 (KHTMDIAVEA…FTKYLDIDEE (67 aa)). 2 tandem repeats follow at residues 369–419 (DIDE…KNAL) and 444–494 (GLDR…RNIC). Positions 369–494 (DIDEEFATVL…ELIMAARNIC (126 aa)) are 2 X 51 AA approximate repeats.

The protein belongs to the NusA family. In terms of assembly, monomer. Binds directly to the core enzyme of the DNA-dependent RNA polymerase and to nascent RNA.

The protein localises to the cytoplasm. Functionally, participates in both transcription termination and antitermination. The sequence is that of Transcription termination/antitermination protein NusA from Salmonella typhimurium (strain LT2 / SGSC1412 / ATCC 700720).